Consider the following 304-residue polypeptide: Non-specific ribonucleoside hydrolase RihC (304 aa).

His233 is a catalytic residue.

Belongs to the IUNH family. RihC subfamily.

Its function is as follows. Hydrolyzes both purine and pyrimidine ribonucleosides with a broad-substrate specificity. The polypeptide is Non-specific ribonucleoside hydrolase RihC (Klebsiella pneumoniae subsp. pneumoniae (strain ATCC 700721 / MGH 78578)).